We begin with the raw amino-acid sequence, 382 residues long: Pyrimidine monooxygenase RutA (382 aa).

FMN contacts are provided by residues 68-69, Asn134, Glu143, 159-160, and Ser209; these read IK and RY.

This sequence belongs to the NtaA/SnaA/DszA monooxygenase family. RutA subfamily.

It carries out the reaction uracil + FMNH2 + NADH + O2 = (Z)-3-ureidoacrylate + FMN + NAD(+) + H2O + H(+). It catalyses the reaction thymine + FMNH2 + NADH + O2 = (Z)-2-methylureidoacrylate + FMN + NAD(+) + H2O + H(+). Its function is as follows. Catalyzes the pyrimidine ring opening between N-3 and C-4 by an unusual flavin hydroperoxide-catalyzed mechanism, adding oxygen atoms in the process to yield ureidoacrylate peracid, that immediately reacts with FMN forming ureidoacrylate and FMN-N(5)-oxide. The FMN-N(5)-oxide reacts spontaneously with NADH to produce FMN. Requires the flavin reductase RutF to regenerate FMN in vivo. The polypeptide is Pyrimidine monooxygenase RutA (Escherichia coli (strain 55989 / EAEC)).